A 447-amino-acid polypeptide reads, in one-letter code: Putative branched-chain amino acid carrier protein SAR1419 (447 aa).

12 consecutive transmembrane segments (helical) span residues 6–26, 40–60, 74–94, 114–134, 143–163, 193–213, 229–249, 290–310, 326–346, 350–370, 382–402, and 417–437; these read WVIG…IFPP, ILAF…VGAL, PKFS…LFAI, SSIA…YICL, IGSL…IKAY, GYLT…VNAV, LTAG…LGYI, LLGI…IVAV, FVLV…NAVI, IPVL…ILIA, IPVI…LGWL, and LEWF…GIFV.

The protein belongs to the branched chain amino acid transporter family.

It localises to the cell membrane. In terms of biological role, component of the transport system for branched-chain amino acids (leucine, isoleucine and valine), which is coupled to a proton motive force (Potential). Contributes to NaCl tolerance. The chain is Putative branched-chain amino acid carrier protein SAR1419 from Staphylococcus aureus (strain MRSA252).